Consider the following 222-residue polypeptide: Polyadenylate-binding protein 2 (222 aa).

The interval 1-43 (MTDNNNGEIVEDKDNEKLKGEDNINNHISNHNNTEETSFEDPE) is disordered. Basic and acidic residues predominate over residues 10–24 (VEDKDNEKLKGEDNI). In terms of domain architecture, RRM spans 101-178 (RSVYVGNVDY…RQLKITPKRT (78 aa)).

The protein resides in the nucleus. Involved in the 3'-end formation of mRNA precursors (pre-mRNA) by the addition of a poly(A) tail of 200-250 nt to the upstream cleavage product. The protein is Polyadenylate-binding protein 2 (pabpn1) of Dictyostelium discoideum (Social amoeba).